We begin with the raw amino-acid sequence, 147 residues long: uncharacterized protein (147 aa).

It to M.jannaschii MJ1086 N-terminal region.

This is an uncharacterized protein from Methanocaldococcus jannaschii (strain ATCC 43067 / DSM 2661 / JAL-1 / JCM 10045 / NBRC 100440) (Methanococcus jannaschii).